Reading from the N-terminus, the 811-residue chain is Ribosome biogenesis protein ERB1 (811 aa).

The segment covering 1 to 11 has biased composition (polar residues); it reads MARNSKATDTP. The tract at residues 1-138 is disordered; it reads MARNSKATDT…VHTKFSDGRP (138 aa). Positions 27–96 are enriched in acidic residues; that stretch reads EDAEESSSDE…LSDVDSEEFS (70 aa). Residues 104 to 121 show a composition bias toward polar residues; it reads ASITDKLSGTKIRSYSNA. Positions 128-138 are enriched in basic and acidic residues; sequence EVHTKFSDGRP. Residues 270–386 form a required for interaction with NOP7 region; that stretch reads RFVPSKHEAK…LRKVPGYQEG (117 aa). The required for interaction with YTM1 stretch occupies residues 386–422; that stretch reads GLRERFERCLDLYLAPRTRHNKLNIDPDSLIPELPSP. WD repeat units lie at residues 438–477 and 485–525; these read GHTE…QVYK and NTDD…FDIE. Residues 547–566 are disordered; it reads TKNSNIKVNSDDEDEEVEKA. WD repeat units follow at residues 595 to 637, 640 to 678, 681 to 720, 724 to 764, and 780 to 811; these read QCRK…SQSP, KSKG…LVKK, PGAR…TPYK, YHDK…DLMT, and INSL…LWTT.

This sequence belongs to the WD repeat BOP1/ERB1 family. Component of the NOP7 complex, composed of ERB1, NOP7 and YTM1. The complex is held together by ERB1, which interacts with NOP7 via its N-terminal domain and with YTM1 via a high-affinity interaction between the seven-bladed beta-propeller domains of the 2 proteins. The NOP7 complex associates with the 66S pre-ribosome.

It is found in the nucleus. Its subcellular location is the nucleolus. It localises to the nucleoplasm. In terms of biological role, component of the NOP7 complex, which is required for maturation of the 25S and 5.8S ribosomal RNAs and formation of the 60S ribosome. In Debaryomyces hansenii (strain ATCC 36239 / CBS 767 / BCRC 21394 / JCM 1990 / NBRC 0083 / IGC 2968) (Yeast), this protein is Ribosome biogenesis protein ERB1.